A 454-amino-acid chain; its full sequence is MMTDSMRLVWEKAKEAIRSQVPDQGYLMWIDPLRVVKAAADSVVLGCPNPLAKKWLMDHYRGLLESAMQQAAQRPLKVLLEVAECVAEAPETPEEAPQQLCLPAFADIPRPSSGRLLNRDFTFDSFVVGDCNDFAYSAALSVASKRSKLHAPLYLLAQTGLGKSHLSQAVGRQVMQESPEERVFYITAEDFTNEMIGALNTGTISSFKEKYRRNCDTLILEDVHFLSGKNRTQDELAFTLDSLMETNKRLVFTSAYLPSEIPKMHDSMRSRLNAGVISSLEAPDFRMRMRILQRKANSAKIALPMDVAEFMASELTGDIRHLESGIKGLAARNSIMGRGIDLKMAREVVGNIVRNRKALTLGVITKMVCKYYRVTEEDLRSRSRKQAIARPRQVAMYLGRRYTDQSLQAIGRTFNRYHATALHAVGVVERHIRENGDMREPVLFLCGKIEAGEF.

The interval 1 to 83 (MMTDSMRLVW…RPLKVLLEVA (83 aa)) is domain I, interacts with DnaA modulators. Positions 83–115 (AECVAEAPETPEEAPQQLCLPAFADIPRPSSGR) are domain II. Residues 116–333 (LLNRDFTFDS…SGIKGLAARN (218 aa)) are domain III, AAA+ region. ATP is bound by residues G160, G162, K163, and S164. A domain IV, binds dsDNA region spans residues 334-454 (SIMGRGIDLK…LCGKIEAGEF (121 aa)).

It belongs to the DnaA family. As to quaternary structure, oligomerizes as a right-handed, spiral filament on DNA at oriC.

It is found in the cytoplasm. Plays an essential role in the initiation and regulation of chromosomal replication. ATP-DnaA binds to the origin of replication (oriC) to initiate formation of the DNA replication initiation complex once per cell cycle. Binds the DnaA box (a 9 base pair repeat at the origin) and separates the double-stranded (ds)DNA. Forms a right-handed helical filament on oriC DNA; dsDNA binds to the exterior of the filament while single-stranded (ss)DNA is stabiized in the filament's interior. The ATP-DnaA-oriC complex binds and stabilizes one strand of the AT-rich DNA unwinding element (DUE), permitting loading of DNA polymerase. After initiation quickly degrades to an ADP-DnaA complex that is not apt for DNA replication. Binds acidic phospholipids. The sequence is that of Chromosomal replication initiator protein DnaA from Desulfatibacillum aliphaticivorans.